The chain runs to 246 residues: Transcription factor A, mitochondrial (246 aa).

A mitochondrion-targeting transit peptide spans 1–42; the sequence is MAFLRSMWGVLSALGRSGAAVCIGCGSRLRSPFSFVYLPKCF. A DNA-binding region (HMG box 1) is located at residues 50–118; that stretch reads PKKPVSSYLR…VYKEKISRFK (69 aa). Phosphoserine; by PKA occurs at positions 55, 56, and 61. The residue at position 122 (Thr122) is a Phosphothreonine. A DNA-binding region (HMG box 2) is located at residues 155–219; sequence PKRPRSAYNV…RYHNEMKSWE (65 aa). Ser160 is modified (phosphoserine; by PKA). Phosphoserine occurs at positions 193 and 195.

As to quaternary structure, monomer; binds DNA as a monomer. Homodimer. Component of the mitochondrial transcription initiation complex, composed at least of TFB2M, TFAM and POLRMT. In this complex TFAM recruits POLRMT to the promoter whereas TFB2M induces structural changes in POLRMT to enable promoter opening and trapping of the DNA non-template strand. Upon metabolic stress, forms a complex composed of FOXO3, SIRT3, TFAM and POLRMT. Interacts with TFB1M and TFB2M. Interacts with CLPX; this enhances DNA-binding. In terms of processing, phosphorylation by PKA within the HMG box 1 impairs DNA binding and promotes degradation by the AAA+ Lon protease.

Its subcellular location is the mitochondrion. It is found in the mitochondrion matrix. The protein localises to the mitochondrion nucleoid. In terms of biological role, binds to the mitochondrial light strand promoter and functions in mitochondrial transcription regulation. Component of the mitochondrial transcription initiation complex, composed at least of TFB2M, TFAM and POLRMT that is required for basal transcription of mitochondrial DNA. In this complex, TFAM recruits POLRMT to a specific promoter whereas TFB2M induces structural changes in POLRMT to enable promoter opening and trapping of the DNA non-template strand. Required for accurate and efficient promoter recognition by the mitochondrial RNA polymerase. Promotes transcription initiation from the HSP1 and the light strand promoter by binding immediately upstream of transcriptional start sites. Is able to unwind DNA. Bends the mitochondrial light strand promoter DNA into a U-turn shape via its HMG boxes. Required for maintenance of normal levels of mitochondrial DNA. May play a role in organizing and compacting mitochondrial DNA. This chain is Transcription factor A, mitochondrial, found in Trachypithecus cristatus (Silvered leaf-monkey).